The sequence spans 208 residues: uncharacterized protein (208 aa).

A compositionally biased stretch (low complexity) spans 118–134 (QYPNQYQQQPQQQQPGY). Residues 118 to 208 (QYPNQYQQQP…HKKEKNEIKE (91 aa)) are disordered. Residues 138 to 175 (NYNQPPVQLNKQAYDNYQQNDYKSNNQPNLAKENNISN) show a composition bias toward polar residues. The span at 187–201 (KKEKKHSFFSKLHKK) shows a compositional bias: basic residues.

This is an uncharacterized protein from Dictyostelium discoideum (Social amoeba).